The chain runs to 130 residues: uncharacterized protein (130 aa).

Residues 8 to 28 (PFILMIIVLGLFLVSIGGYYY) traverse the membrane as a helical segment.

Its subcellular location is the membrane. This is an uncharacterized protein from Bacillus anthracis.